The following is a 224-amino-acid chain: MSTAEQRLRLMQLASSNLPIGGYSWSQGLEWAVEAGWVPDVAAFERWQRRQMTEGFFTVDLPLFARLYRACEQGDIAAAQRWTAYLLACRETRELREEERNRGAAFARLLSDWQPDCPPAWRTLCQQSQLAGMAWLGVRWRIALPEMALSLGYSWIESAVMAGVKLVPFGQQAAQQLILRLCDHYAAEMPRALAAPDGDIGSATPLAAIASARHETQYSRLFRS.

The protein belongs to the UreF family. UreD, UreF and UreG form a complex that acts as a GTP-hydrolysis-dependent molecular chaperone, activating the urease apoprotein by helping to assemble the nickel containing metallocenter of UreC. The UreE protein probably delivers the nickel.

It localises to the cytoplasm. In terms of biological role, required for maturation of urease via the functional incorporation of the urease nickel metallocenter. The polypeptide is Urease accessory protein UreF (Klebsiella pneumoniae (strain 342)).